We begin with the raw amino-acid sequence, 120 residues long: NAD(P)H-quinone oxidoreductase subunit 3, chloroplastic (120 aa).

The next 3 membrane-spanning stretches (helical) occupy residues 9–29 (IFWAFLLISSVIPILAFLISG), 64–84 (MFALVFVVFDVETVFLYPWAM), and 88–108 (VLGVSVFLEALIFVLILIVGS).

It belongs to the complex I subunit 3 family. NDH is composed of at least 16 different subunits, 5 of which are encoded in the nucleus.

It is found in the plastid. Its subcellular location is the chloroplast thylakoid membrane. The enzyme catalyses a plastoquinone + NADH + (n+1) H(+)(in) = a plastoquinol + NAD(+) + n H(+)(out). It carries out the reaction a plastoquinone + NADPH + (n+1) H(+)(in) = a plastoquinol + NADP(+) + n H(+)(out). NDH shuttles electrons from NAD(P)H:plastoquinone, via FMN and iron-sulfur (Fe-S) centers, to quinones in the photosynthetic chain and possibly in a chloroplast respiratory chain. The immediate electron acceptor for the enzyme in this species is believed to be plastoquinone. Couples the redox reaction to proton translocation, and thus conserves the redox energy in a proton gradient. This chain is NAD(P)H-quinone oxidoreductase subunit 3, chloroplastic, found in Acorus calamus var. americanus (American sweet flag).